The chain runs to 198 residues: Recombination protein RecR (198 aa).

A C4-type zinc finger spans residues 57–72 (CRQCRTLSEEELCPQC). The Toprim domain occupies 80-174 (SLLCVVEGPL…TLSRIAHGVP (95 aa)).

Belongs to the RecR family.

May play a role in DNA repair. It seems to be involved in an RecBC-independent recombinational process of DNA repair. It may act with RecF and RecO. The protein is Recombination protein RecR of Pseudomonas paraeruginosa (strain DSM 24068 / PA7) (Pseudomonas aeruginosa (strain PA7)).